Reading from the N-terminus, the 268-residue chain is Shikimate dehydrogenase (NADP(+)) (268 aa).

Shikimate-binding positions include 13–15 (SLS) and T60. The active-site Proton acceptor is the K64. E76 provides a ligand contact to NADP(+). 2 residues coordinate shikimate: N85 and D100. NADP(+) contacts are provided by residues 124 to 128 (GAGGA), 148 to 153 (NRTMAR), and I209. Y211 contacts shikimate. An NADP(+)-binding site is contributed by G232.

Belongs to the shikimate dehydrogenase family. As to quaternary structure, homodimer.

It carries out the reaction shikimate + NADP(+) = 3-dehydroshikimate + NADPH + H(+). Its pathway is metabolic intermediate biosynthesis; chorismate biosynthesis; chorismate from D-erythrose 4-phosphate and phosphoenolpyruvate: step 4/7. In terms of biological role, involved in the biosynthesis of the chorismate, which leads to the biosynthesis of aromatic amino acids. Catalyzes the reversible NADPH linked reduction of 3-dehydroshikimate (DHSA) to yield shikimate (SA). This chain is Shikimate dehydrogenase (NADP(+)), found in Staphylococcus aureus (strain MRSA252).